The sequence spans 240 residues: Ribose-5-phosphate isomerase A (240 aa).

Substrate contacts are provided by residues 41–44 (TGST), 94–97 (DGAD), and 107–110 (KGGG). Glu116 (proton acceptor) is an active-site residue. Lys134 provides a ligand contact to substrate.

It belongs to the ribose 5-phosphate isomerase family. As to quaternary structure, homodimer.

It catalyses the reaction aldehydo-D-ribose 5-phosphate = D-ribulose 5-phosphate. It participates in carbohydrate degradation; pentose phosphate pathway; D-ribose 5-phosphate from D-ribulose 5-phosphate (non-oxidative stage): step 1/1. Catalyzes the reversible conversion of ribose-5-phosphate to ribulose 5-phosphate. This chain is Ribose-5-phosphate isomerase A, found in Polaromonas sp. (strain JS666 / ATCC BAA-500).